Consider the following 346-residue polypeptide: Phosphoribosylformylglycinamidine cyclo-ligase (346 aa).

It belongs to the AIR synthase family.

The protein localises to the cytoplasm. It catalyses the reaction 2-formamido-N(1)-(5-O-phospho-beta-D-ribosyl)acetamidine + ATP = 5-amino-1-(5-phospho-beta-D-ribosyl)imidazole + ADP + phosphate + H(+). It functions in the pathway purine metabolism; IMP biosynthesis via de novo pathway; 5-amino-1-(5-phospho-D-ribosyl)imidazole from N(2)-formyl-N(1)-(5-phospho-D-ribosyl)glycinamide: step 2/2. The chain is Phosphoribosylformylglycinamidine cyclo-ligase from Vibrio vulnificus (strain YJ016).